We begin with the raw amino-acid sequence, 717 residues long: Catalase-peroxidase (717 aa).

Positions Met1–Lys20 are disordered. The segment covering Gly11–Lys20 has biased composition (polar residues). Positions Trp91–Tyr219 form a cross-link, tryptophyl-tyrosyl-methioninium (Trp-Tyr) (with M-245). The active-site Proton acceptor is the His92. Residues Tyr219 to Met245 constitute a cross-link (tryptophyl-tyrosyl-methioninium (Tyr-Met) (with W-91)). A heme b-binding site is contributed by His260.

It belongs to the peroxidase family. Peroxidase/catalase subfamily. As to quaternary structure, homodimer or homotetramer. Requires heme b as cofactor. In terms of processing, formation of the three residue Trp-Tyr-Met cross-link is important for the catalase, but not the peroxidase activity of the enzyme.

The enzyme catalyses H2O2 + AH2 = A + 2 H2O. It carries out the reaction 2 H2O2 = O2 + 2 H2O. Functionally, bifunctional enzyme with both catalase and broad-spectrum peroxidase activity. The polypeptide is Catalase-peroxidase (Chromohalobacter salexigens (strain ATCC BAA-138 / DSM 3043 / CIP 106854 / NCIMB 13768 / 1H11)).